We begin with the raw amino-acid sequence, 506 residues long: Arabinose import ATP-binding protein AraG (506 aa).

ABC transporter domains lie at 10 to 245 and 253 to 501; these read LEFC…MVGR and YRSR…MLGN. Residue 42 to 49 coordinates ATP; that stretch reads GENGAGKS.

This sequence belongs to the ABC transporter superfamily. Arabinose importer (TC 3.A.1.2.2) family. As to quaternary structure, the complex is composed of two ATP-binding proteins (AraG), two transmembrane proteins (AraH) and a solute-binding protein (AraF).

The protein localises to the cell inner membrane. It catalyses the reaction L-arabinose(out) + ATP + H2O = L-arabinose(in) + ADP + phosphate + H(+). Part of the ABC transporter complex AraFGH involved in arabinose import. Responsible for energy coupling to the transport system. The protein is Arabinose import ATP-binding protein AraG of Vibrio parahaemolyticus serotype O3:K6 (strain RIMD 2210633).